The primary structure comprises 908 residues: Protein translocase subunit SecA (908 aa).

ATP-binding positions include Gln87, 105–109 (GEGKT), and Asp512. Residues 865-908 (GGDDGSDEMMAHTPMIRDGDKVGRNDPCPCGSGRKYKQCHGKLS) form a disordered region. A compositionally biased stretch (basic and acidic residues) spans 879–888 (MIRDGDKVGR). Zn(2+)-binding residues include Cys892, Cys894, Cys903, and His904. Over residues 898-908 (RKYKQCHGKLS) the composition is skewed to basic residues.

This sequence belongs to the SecA family. Monomer and homodimer. Part of the essential Sec protein translocation apparatus which comprises SecA, SecYEG and auxiliary proteins SecDF-YajC and YidC. Zn(2+) is required as a cofactor.

The protein resides in the cell inner membrane. The protein localises to the cytoplasm. The enzyme catalyses ATP + H2O + cellular proteinSide 1 = ADP + phosphate + cellular proteinSide 2.. In terms of biological role, part of the Sec protein translocase complex. Interacts with the SecYEG preprotein conducting channel. Has a central role in coupling the hydrolysis of ATP to the transfer of proteins into and across the cell membrane, serving both as a receptor for the preprotein-SecB complex and as an ATP-driven molecular motor driving the stepwise translocation of polypeptide chains across the membrane. This is Protein translocase subunit SecA from Shewanella sp. (strain ANA-3).